We begin with the raw amino-acid sequence, 394 residues long: Ribulose bisphosphate carboxylase large chain (394 aa).

At Lys-5 the chain carries N6,N6,N6-trimethyllysine. Residues Asn-114 and Thr-164 each coordinate substrate. Residue Lys-166 is the Proton acceptor of the active site. Lys-168 is a substrate binding site. Mg(2+)-binding residues include Lys-192, Asp-194, and Glu-195. Lys-192 carries the N6-carboxylysine modification. The active-site Proton acceptor is the His-285. Positions 286, 318, and 370 each coordinate substrate.

This sequence belongs to the RuBisCO large chain family. Type I subfamily. Heterohexadecamer of 8 large chains and 8 small chains. Mg(2+) serves as cofactor.

It is found in the plastid. It localises to the chloroplast. It carries out the reaction 2 (2R)-3-phosphoglycerate + 2 H(+) = D-ribulose 1,5-bisphosphate + CO2 + H2O. The enzyme catalyses D-ribulose 1,5-bisphosphate + O2 = 2-phosphoglycolate + (2R)-3-phosphoglycerate + 2 H(+). Functionally, ruBisCO catalyzes two reactions: the carboxylation of D-ribulose 1,5-bisphosphate, the primary event in carbon dioxide fixation, as well as the oxidative fragmentation of the pentose substrate in the photorespiration process. Both reactions occur simultaneously and in competition at the same active site. The chain is Ribulose bisphosphate carboxylase large chain (rbcL) from Barclaya longifolia (Orchid lily).